We begin with the raw amino-acid sequence, 151 residues long: Ribosome maturation factor RimP (151 aa).

It belongs to the RimP family.

It is found in the cytoplasm. Functionally, required for maturation of 30S ribosomal subunits. In Vibrio campbellii (strain ATCC BAA-1116), this protein is Ribosome maturation factor RimP.